Consider the following 505-residue polypeptide: Olfactomedin-4 (505 aa).

A signal peptide spans 1 to 18 (MSYSLLFLLALQFCLGSA). N64 and N128 each carry an N-linked (GlcNAc...) asparagine glycan. The stretch at 174 to 225 (HIIDMLEVEIRNMTLLVEKLESLDQNNVLSIRRQILALKTKLKECEASKSDL) forms a coiled coil. Residues 237–499 (SCSHGGVVNI…LLNYDLVFLQ (263 aa)) enclose the Olfactomedin-like domain. The cysteines at positions 238 and 429 are disulfide-linked.

Homomultimer; disulfide-linked. Interacts with NDUFA13. Interacts with cell surface lectins (locutions ricinus communis agglutinin I, concanavalin A and wheat germ agglutinin) and cadherin. In terms of processing, N-glycosylated.

Its subcellular location is the secreted. It localises to the extracellular space. The protein resides in the mitochondrion. In terms of biological role, may promote proliferation of pancreatic cancer cells by favoring the transition from the S to G2/M phase. In myeloid leukemic cell lines, inhibits cell growth and induces cell differentiation and apoptosis. May play a role in the inhibition of EIF4EBP1 phosphorylation/deactivation. Facilitates cell adhesion, most probably through interaction with cell surface lectins and cadherin. The polypeptide is Olfactomedin-4 (Olfm4) (Mus musculus (Mouse)).